The chain runs to 333 residues: Methionine import ATP-binding protein MetN 1 (333 aa).

In terms of domain architecture, ABC transporter spans 2-241; sequence ITFEGVEKVY…PETETAKSFV (240 aa). 38-45 contributes to the ATP binding site; that stretch reads GFSGAGKS.

The protein belongs to the ABC transporter superfamily. Methionine importer (TC 3.A.1.24) family. In terms of assembly, the complex is composed of two ATP-binding proteins (MetN), two transmembrane proteins (MetI) and a solute-binding protein (MetQ).

It localises to the cell membrane. It carries out the reaction L-methionine(out) + ATP + H2O = L-methionine(in) + ADP + phosphate + H(+). It catalyses the reaction D-methionine(out) + ATP + H2O = D-methionine(in) + ADP + phosphate + H(+). Part of the ABC transporter complex MetNIQ involved in methionine import. Responsible for energy coupling to the transport system. This chain is Methionine import ATP-binding protein MetN 1, found in Bacillus licheniformis (strain ATCC 14580 / DSM 13 / JCM 2505 / CCUG 7422 / NBRC 12200 / NCIMB 9375 / NCTC 10341 / NRRL NRS-1264 / Gibson 46).